Here is a 594-residue protein sequence, read N- to C-terminus: Alpha-1,4-glucan:maltose-1-phosphate maltosyltransferase (594 aa).

The disordered stretch occupies residues 244 to 270 (NRKGRNNSLTPGPDDPGSPYAIGSEEG). Positions 246, 306, and 341 each coordinate alpha-maltose 1-phosphate. The active-site Nucleophile is aspartate 377. Asparagine 378 is a binding site for alpha-maltose 1-phosphate. The active-site Proton donor is glutamate 406. 517–518 (KY) serves as a coordination point for alpha-maltose 1-phosphate.

Belongs to the glycosyl hydrolase 13 family. GlgE subfamily. As to quaternary structure, homodimer.

The enzyme catalyses alpha-maltose 1-phosphate + [(1-&gt;4)-alpha-D-glucosyl](n) = [(1-&gt;4)-alpha-D-glucosyl](n+2) + phosphate. In terms of biological role, maltosyltransferase that uses maltose 1-phosphate (M1P) as the sugar donor to elongate linear or branched alpha-(1-&gt;4)-glucans. Is involved in a branched alpha-glucan biosynthetic pathway from trehalose, together with TreS, Mak and GlgB. The sequence is that of Alpha-1,4-glucan:maltose-1-phosphate maltosyltransferase from Cereibacter sphaeroides (Rhodobacter sphaeroides).